Reading from the N-terminus, the 304-residue chain is Acetyl-coenzyme A carboxylase carboxyl transferase subunit beta (304 aa).

One can recognise a CoA carboxyltransferase N-terminal domain in the interval 23 to 292 (VWTKCDSCGQ…PNPEAPREGV (270 aa)). Zn(2+) contacts are provided by cysteine 27, cysteine 30, cysteine 46, and cysteine 49. Residues 27 to 49 (CDSCGQVLYRAELERNLEVCPKC) form a C4-type zinc finger. The segment at 285–304 (PEAPREGVVVPPVPDQEPEA) is disordered. A compositionally biased stretch (pro residues) spans 295–304 (PPVPDQEPEA).

The protein belongs to the AccD/PCCB family. As to quaternary structure, acetyl-CoA carboxylase is a heterohexamer composed of biotin carboxyl carrier protein (AccB), biotin carboxylase (AccC) and two subunits each of ACCase subunit alpha (AccA) and ACCase subunit beta (AccD). Zn(2+) serves as cofactor.

The protein resides in the cytoplasm. It carries out the reaction N(6)-carboxybiotinyl-L-lysyl-[protein] + acetyl-CoA = N(6)-biotinyl-L-lysyl-[protein] + malonyl-CoA. The protein operates within lipid metabolism; malonyl-CoA biosynthesis; malonyl-CoA from acetyl-CoA: step 1/1. Functionally, component of the acetyl coenzyme A carboxylase (ACC) complex. Biotin carboxylase (BC) catalyzes the carboxylation of biotin on its carrier protein (BCCP) and then the CO(2) group is transferred by the transcarboxylase to acetyl-CoA to form malonyl-CoA. This chain is Acetyl-coenzyme A carboxylase carboxyl transferase subunit beta, found in Escherichia coli O6:H1 (strain CFT073 / ATCC 700928 / UPEC).